Consider the following 537-residue polypeptide: Chaperonin GroEL (537 aa).

ATP is bound by residues 29 to 32, 86 to 90, glycine 413, 477 to 479, and aspartate 493; these read TLGP, DGTTT, and NAA.

Belongs to the chaperonin (HSP60) family. Forms a cylinder of 14 subunits composed of two heptameric rings stacked back-to-back. Interacts with the co-chaperonin GroES.

It is found in the cytoplasm. It carries out the reaction ATP + H2O + a folded polypeptide = ADP + phosphate + an unfolded polypeptide.. Functionally, together with its co-chaperonin GroES, plays an essential role in assisting protein folding. The GroEL-GroES system forms a nano-cage that allows encapsulation of the non-native substrate proteins and provides a physical environment optimized to promote and accelerate protein folding. The sequence is that of Chaperonin GroEL from Parascardovia denticolens (Bifidobacterium denticolens).